Here is a 401-residue protein sequence, read N- to C-terminus: MDPTRAPDFKPPSADEELIPPPDPESKIPKSIPIIPYVLADANSSIDAPFNIKRKKKHPKHHHHHHHSRKEGNDKKHQHIPLNQDDFQPLSAEVSSEDDDADFRSKERYGSDSTTESETRGVQKYQIADLEEVPHGIVRQARTLEDYEFPSHRLSKKLLDPNKLPLVIVACGSFSPITYLHLRMFEMALDAISEQTRFEVIGGYYSPVSDNYQKQGLAPSYHRVRMCELACERTSSWLMVDAWESLQPSYTRTAKVLDHFNHEINIKRGGVATVTGEKIGVKIMLLAGGDLIESMGEPNVWADADLHHILGNYGCLIVERTGSDVRSFLLSHDIMYEHRRNILIIKQLIYNDISSTKVRLFIRRAMSVQYLLPNSVIRYIQEHRLYVDQTEPVKQVLGNKE.

Disordered regions lie at residues 1 to 30 (MDPT…KIPK) and 48 to 123 (APFN…RGVQ). Residues 52 to 69 (IKRKKKHPKHHHHHHHSR) show a composition bias toward basic residues. A phosphoserine mark is found at Ser91, Ser95, Ser96, and Ser111. Positions 173 and 174 each coordinate NAD(+). His181 provides a ligand contact to ATP. Residues Thr253, Gly288, Asp290, Trp301, Arg320, and Asn351 each contribute to the NAD(+) site. An ATP-binding site is contributed by 356–359 (TKVR).

This sequence belongs to the eukaryotic NMN adenylyltransferase family. Homotetramer. Ni(2+) serves as cofactor.

It is found in the cytoplasm. The protein localises to the nucleus. It carries out the reaction beta-nicotinamide D-ribonucleotide + ATP + H(+) = diphosphate + NAD(+). The catalysed reaction is nicotinate beta-D-ribonucleotide + ATP + H(+) = deamido-NAD(+) + diphosphate. It functions in the pathway cofactor biosynthesis; NAD(+) biosynthesis; deamido-NAD(+) from nicotinate D-ribonucleotide: step 1/1. Its pathway is cofactor biosynthesis; NAD(+) biosynthesis; NAD(+) from nicotinamide D-ribonucleotide: step 1/1. In terms of biological role, catalyzes the formation of NAD(+) from nicotinamide mononucleotide (NMN) and ATP. Can also use the deamidated form; nicotinic acid mononucleotide (NaMN) as substrate to form deamido-NAD(+) (NaAD). Key enzyme in both de novo and salvage pathways for NAD(+) biosynthesis. Predominantly acts in the salvage pathways via NMN. This Saccharomyces cerevisiae (strain ATCC 204508 / S288c) (Baker's yeast) protein is Nicotinamide/nicotinic acid mononucleotide adenylyltransferase 1.